Here is a 381-residue protein sequence, read N- to C-terminus: Penicillin-binding protein 4 (381 aa).

The Acyl-ester intermediate role is filled by S60. A helical membrane pass occupies residues 271 to 291; that stretch reads VAGCLDTWSFMATGWGHGWAL. 299 to 308 lines the NAD(+) pocket; it reads GYGHDGASGG. The helical transmembrane segment at 315 to 340 threads the bilayer; the sequence is VVPGSGVVAALLTNGGVATSFFTDLF.

The protein belongs to the beta-lactamase family.

The protein resides in the cell membrane. Functionally, involved in cell wall biosynthesis and may also act as a sensor of external penicillins. This chain is Penicillin-binding protein 4 (pbp), found in Amycolatopsis lactamdurans (Nocardia lactamdurans).